Here is a 294-residue protein sequence, read N- to C-terminus: 4-diphosphocytidyl-2-C-methyl-D-erythritol kinase (294 aa).

The active site involves K23. Residue 106–116 (PMGGGLGGGSS) participates in ATP binding. Residue D148 is part of the active site.

Belongs to the GHMP kinase family. IspE subfamily.

It carries out the reaction 4-CDP-2-C-methyl-D-erythritol + ATP = 4-CDP-2-C-methyl-D-erythritol 2-phosphate + ADP + H(+). It participates in isoprenoid biosynthesis; isopentenyl diphosphate biosynthesis via DXP pathway; isopentenyl diphosphate from 1-deoxy-D-xylulose 5-phosphate: step 3/6. Its function is as follows. Catalyzes the phosphorylation of the position 2 hydroxy group of 4-diphosphocytidyl-2C-methyl-D-erythritol. This is 4-diphosphocytidyl-2-C-methyl-D-erythritol kinase from Nitrosospira multiformis (strain ATCC 25196 / NCIMB 11849 / C 71).